The following is a 734-amino-acid chain: MALRFPRFSQGLAQDPTTRRIWFGIATAHDFESHDDITEERLYQNIFASHFGQLAIIFLWTSGNLFHVAWQGNFEAWVQDPLHVRPIAHAIWDPHFGQPAVEAFTRGGALGPVNIAYSGVYQWWYTIGLRTNEDLYTGALFLLFLSAISLIAGWLHLQPKWKPSVSWFKNAESRLNHHLSGLFGVSSLAWTGHLVHVAIPGSRGEYVRWNNFLDVLPHPEGLGPLFTGQWNLYAQNPDSNSHLFGTSQGSGTAILTLLGGFHPQTQSLWLTDIAHHHLAIAFIFLVAGHMYRTNFGIGHSIKDLLEAHTPPGGRLGRGHKGLYDTINNSIHFQLGLALASLGVITSLVAQHMYSLPAYAFIAQDFTTQAALYTHHQYIAGFIMTGAFAHGAIFFIRDYNPEQNEDNVLARMLDHKEAIISHLSWASLFLGFHTLGLYVHNDVMLAFGTPEKQILIEPIFAQWIQSAHGKTSYGFDVLLSSTNSPAFNAGQSIWLPGWLNAINENSNSLFLTIGPGDFLVHHAIALGLHTTTLILVKGALDARGSKLMPDKKDFGYSFPCDGPGRGGTCDISAWDAFYLAVFWMLNTIGWVTFYWHWKHITLWQGNVSQFNESSTYLMGWLRDYLWVNSSQLINGYNPFGMNSLSVWAWMFLFGHLVWATGFMFLISWRGYWQELIETLAWAHERTPLANLIRWRDKPVALSIVQARLVGLAHFSVGYIFTYAAFLIASTSGKFG.

8 helical membrane passes run 46–69, 135–158, 175–199, 273–291, 330–353, 369–395, 417–439, and 517–535; these read IFASHFGQLAIIFLWTSGNLFHVA, LYTGALFLLFLSAISLIAGWLHLQ, LNHHLSGLFGVSSLAWTGHLVHVAI, IAHHHLAIAFIFLVAGHMY, IHFQLGLALASLGVITSLVAQHMY, AALYTHHQYIAGFIMTGAFAHGAIFFI, AIISHLSWASLFLGFHTLGLYVH, and FLVHHAIALGLHTTTLILV. [4Fe-4S] cluster contacts are provided by cysteine 559 and cysteine 568. Transmembrane regions (helical) follow at residues 575 to 596 and 643 to 665; these read AFYLAVFWMLNTIGWVTFYWHW and LSVWAWMFLFGHLVWATGFMFLI. The chlorophyll a site is built by histidine 654, methionine 662, and tyrosine 670. Tryptophan 671 provides a ligand contact to phylloquinone. Residues 707–727 traverse the membrane as a helical segment; sequence LVGLAHFSVGYIFTYAAFLIA.

It belongs to the PsaA/PsaB family. The PsaA/B heterodimer binds the P700 chlorophyll special pair and subsequent electron acceptors. PSI consists of a core antenna complex that captures photons, and an electron transfer chain that converts photonic excitation into a charge separation. The eukaryotic PSI reaction center is composed of at least 11 subunits. The cofactor is P700 is a chlorophyll a/chlorophyll a' dimer, A0 is one or more chlorophyll a, A1 is one or both phylloquinones and FX is a shared 4Fe-4S iron-sulfur center..

It is found in the plastid. The protein resides in the chloroplast thylakoid membrane. It catalyses the reaction reduced [plastocyanin] + hnu + oxidized [2Fe-2S]-[ferredoxin] = oxidized [plastocyanin] + reduced [2Fe-2S]-[ferredoxin]. Functionally, psaA and PsaB bind P700, the primary electron donor of photosystem I (PSI), as well as the electron acceptors A0, A1 and FX. PSI is a plastocyanin-ferredoxin oxidoreductase, converting photonic excitation into a charge separation, which transfers an electron from the donor P700 chlorophyll pair to the spectroscopically characterized acceptors A0, A1, FX, FA and FB in turn. Oxidized P700 is reduced on the lumenal side of the thylakoid membrane by plastocyanin. This Eucalyptus globulus subsp. globulus (Tasmanian blue gum) protein is Photosystem I P700 chlorophyll a apoprotein A2.